Here is a 261-residue protein sequence, read N- to C-terminus: Phosphate import ATP-binding protein PstB 1 (261 aa).

The region spanning 8-256 (IKVNNLSFYY…PHDSRTREYV (249 aa)) is the ABC transporter domain. An ATP-binding site is contributed by 40–47 (GPSGCGKS).

This sequence belongs to the ABC transporter superfamily. Phosphate importer (TC 3.A.1.7) family. As to quaternary structure, the complex is composed of two ATP-binding proteins (PstB), two transmembrane proteins (PstC and PstA) and a solute-binding protein (PstS).

Its subcellular location is the cell inner membrane. The enzyme catalyses phosphate(out) + ATP + H2O = ADP + 2 phosphate(in) + H(+). In terms of biological role, part of the ABC transporter complex PstSACB involved in phosphate import. Responsible for energy coupling to the transport system. In Nostoc sp. (strain PCC 7120 / SAG 25.82 / UTEX 2576), this protein is Phosphate import ATP-binding protein PstB 1.